We begin with the raw amino-acid sequence, 460 residues long: Wadjet protein JetA (460 aa).

Component of antiplasmid transformation system Wadjet type I, composed of JetA, JetB, JetC and JetD. Expression of Wadjet type I in B.subtilis (strain BEST7003) reduces the transformation efficiency of plasmid pHCMC05. The chain is Wadjet protein JetA from Bacillus cereus (strain Q1).